A 156-amino-acid chain; its full sequence is Ribosomal RNA large subunit methyltransferase H (156 aa).

S-adenosyl-L-methionine is bound by residues Gly-104 and 123–128; that span reads LSAMTL.

This sequence belongs to the RNA methyltransferase RlmH family. Homodimer.

It localises to the cytoplasm. The enzyme catalyses pseudouridine(1915) in 23S rRNA + S-adenosyl-L-methionine = N(3)-methylpseudouridine(1915) in 23S rRNA + S-adenosyl-L-homocysteine + H(+). In terms of biological role, specifically methylates the pseudouridine at position 1915 (m3Psi1915) in 23S rRNA. In Chromobacterium violaceum (strain ATCC 12472 / DSM 30191 / JCM 1249 / CCUG 213 / NBRC 12614 / NCIMB 9131 / NCTC 9757 / MK), this protein is Ribosomal RNA large subunit methyltransferase H.